The sequence spans 681 residues: T-box-containing protein 2 (681 aa).

The T-box DNA-binding region spans 149–323 (LWDQFSRAGT…NNPFAKGFRE (175 aa)). Disordered stretches follow at residues 316–351 (PFAKGFREDGARAKKPRNQHNHFSDNDTSPYSEQRR), 456–489 (GITSHSPVQPVPHDNSFTYYNSSSPSSSDSNQSN), 521–558 (PNINIPNTVETNVHSSDSGIGSSPPTPSDDDASNLIPG), and 589–611 (ESGEANANSHTEDFSRNPACQSG). A compositionally biased stretch (low complexity) spans 470 to 489 (NSFTYYNSSSPSSSDSNQSN). Polar residues predominate over residues 521 to 534 (PNINIPNTVETNVH).

Monomer. In terms of tissue distribution, differentiating muscle and tailbud tip.

The protein resides in the nucleus. In terms of biological role, involved in the transcriptional regulation of genes required for muscle differentiation. Binds to a palindromic site (called T site) and activates gene transcription when bound to such a site. The protein is T-box-containing protein 2 (T2) of Halocynthia roretzi (Sea squirt).